The primary structure comprises 275 residues: Ribosomal RNA small subunit methyltransferase A (275 aa).

S-adenosyl-L-methionine is bound by residues Asn19, Leu21, Gly46, Glu71, Asp94, and Asn117.

This sequence belongs to the class I-like SAM-binding methyltransferase superfamily. rRNA adenine N(6)-methyltransferase family. RsmA subfamily.

The protein localises to the cytoplasm. It catalyses the reaction adenosine(1518)/adenosine(1519) in 16S rRNA + 4 S-adenosyl-L-methionine = N(6)-dimethyladenosine(1518)/N(6)-dimethyladenosine(1519) in 16S rRNA + 4 S-adenosyl-L-homocysteine + 4 H(+). In terms of biological role, specifically dimethylates two adjacent adenosines (A1518 and A1519) in the loop of a conserved hairpin near the 3'-end of 16S rRNA in the 30S particle. May play a critical role in biogenesis of 30S subunits. In Burkholderia thailandensis (strain ATCC 700388 / DSM 13276 / CCUG 48851 / CIP 106301 / E264), this protein is Ribosomal RNA small subunit methyltransferase A.